The chain runs to 236 residues: Orotidine 5'-phosphate decarboxylase (236 aa).

Substrate-binding positions include Asp17, Lys39, 66–75 (DLKFHDIPNT), Thr125, Arg186, Gln195, Gly215, and Arg216. Catalysis depends on Lys68, which acts as the Proton donor.

This sequence belongs to the OMP decarboxylase family. Type 1 subfamily. In terms of assembly, homodimer.

It carries out the reaction orotidine 5'-phosphate + H(+) = UMP + CO2. The protein operates within pyrimidine metabolism; UMP biosynthesis via de novo pathway; UMP from orotate: step 2/2. Functionally, catalyzes the decarboxylation of orotidine 5'-monophosphate (OMP) to uridine 5'-monophosphate (UMP). The protein is Orotidine 5'-phosphate decarboxylase of Buchnera aphidicola subsp. Acyrthosiphon pisum (strain 5A).